We begin with the raw amino-acid sequence, 649 residues long: Threonine--tRNA ligase (649 aa).

In terms of domain architecture, TGS spans 1-60 (MHVVLPDGKQLELPMGATALDAASAIGPRLAQDALAATANGELVDLMTPLPDGASITLIT). The catalytic stretch occupies residues 248 to 544 (DHRKLGRELE…LIEHYAGDFP (297 aa)). The Zn(2+) site is built by Cys341, His392, and His521.

The protein belongs to the class-II aminoacyl-tRNA synthetase family. As to quaternary structure, homodimer. The cofactor is Zn(2+).

It is found in the cytoplasm. The enzyme catalyses tRNA(Thr) + L-threonine + ATP = L-threonyl-tRNA(Thr) + AMP + diphosphate + H(+). Functionally, catalyzes the attachment of threonine to tRNA(Thr) in a two-step reaction: L-threonine is first activated by ATP to form Thr-AMP and then transferred to the acceptor end of tRNA(Thr). Also edits incorrectly charged L-seryl-tRNA(Thr). The polypeptide is Threonine--tRNA ligase (Deinococcus deserti (strain DSM 17065 / CIP 109153 / LMG 22923 / VCD115)).